The primary structure comprises 419 residues: UDP-N-acetylglucosamine 1-carboxyvinyltransferase (419 aa).

22-23 is a binding site for phosphoenolpyruvate; sequence KN. Residue Arg-95 coordinates UDP-N-acetyl-alpha-D-glucosamine. The Proton donor role is filled by Cys-119. The residue at position 119 (Cys-119) is a 2-(S-cysteinyl)pyruvic acid O-phosphothioketal. UDP-N-acetyl-alpha-D-glucosamine-binding positions include 164-167, Asp-308, and Ile-330; that span reads KVSV.

It belongs to the EPSP synthase family. MurA subfamily.

It localises to the cytoplasm. It carries out the reaction phosphoenolpyruvate + UDP-N-acetyl-alpha-D-glucosamine = UDP-N-acetyl-3-O-(1-carboxyvinyl)-alpha-D-glucosamine + phosphate. The protein operates within cell wall biogenesis; peptidoglycan biosynthesis. Functionally, cell wall formation. Adds enolpyruvyl to UDP-N-acetylglucosamine. The sequence is that of UDP-N-acetylglucosamine 1-carboxyvinyltransferase from Rickettsia rickettsii (strain Iowa).